The sequence spans 922 residues: 1,4-alpha-glucan-branching enzyme 1, chloroplastic/amyloplastic (922 aa).

The N-terminal 47 residues, 1–47 (MVYTISGIRFPVLPSLHKSTLRCDRRASSHSFFLKNNSSSFSRTSLY), are a transit peptide targeting the chloroplast. The interval 83-130 (LENPDITSEDAQNLEDLTMKDGNKYNIDESTSSYREVGDEKGSVTSSS) is disordered. Positions 99–109 (LTMKDGNKYNI) are enriched in basic and acidic residues. The Nucleophile role is filled by Asp494. Glu549 functions as the Proton donor in the catalytic mechanism. Residues 870 to 922 (VESEPIELSVEEAESEPIERSVEEVESETTQQSVEVESETTQQSVEVESETTQ) form a disordered region. Over residues 897-922 (ETTQQSVEVESETTQQSVEVESETTQ) the composition is skewed to low complexity.

It belongs to the glycosyl hydrolase 13 family. GlgB subfamily. As to quaternary structure, monomer. Expressed in roots, leaves, stipules, pods and flowers.

Its subcellular location is the plastid. It localises to the chloroplast. It is found in the amyloplast. The enzyme catalyses Transfers a segment of a (1-&gt;4)-alpha-D-glucan chain to a primary hydroxy group in a similar glucan chain.. Its pathway is glycan biosynthesis; starch biosynthesis. Functionally, catalyzes the formation of the alpha-1,6-glucosidic linkages in starch by scission of a 1,4-alpha-linked oligosaccharide from growing alpha-1,4-glucan chains and the subsequent attachment of the oligosaccharide to the alpha-1,6 position. May preferentially transfer short chains during branching. Responsible for the synthesis of about 75% of the amylopectin found in the starch granules of mature embryos. This Pisum sativum (Garden pea) protein is 1,4-alpha-glucan-branching enzyme 1, chloroplastic/amyloplastic (SBEI).